We begin with the raw amino-acid sequence, 659 residues long: Interferon-induced GTP-binding protein Mx2 (659 aa).

Positions 65–338 (DLALPAIAVI…LISHICKSLP (274 aa)) constitute a Dynamin-type G domain. The G1 motif stretch occupies residues 75–82 (GDQSSGKS). A GTP-binding site is contributed by 75 to 82 (GDQSSGKS). The G2 motif stretch occupies residues 100–102 (VTR). Residues 176-179 (DLPG) form a G3 motif region. Residues 176-180 (DLPGI) and 245-248 (TKPD) each bind GTP. Residues 245 to 248 (TKPD) form a G4 motif region. Residues 277-280 (KCRG) are G5 motif. The tract at residues 547-567 (EAEEEERKHGKSRSSQSKNLQ) is disordered. Residues 571-659 (MDEIFQHLNA…AQRRLAKFPG (89 aa)) form the GED domain.

Belongs to the TRAFAC class dynamin-like GTPase superfamily. Dynamin/Fzo/YdjA family.

It is found in the cytoplasm. Interferon-induced dynamin-like GTPase with antiviral activity against vesicular stomatitis virus (VSV). This chain is Interferon-induced GTP-binding protein Mx2 (Mx2), found in Rattus norvegicus (Rat).